The following is a 420-amino-acid chain: MDTATPSAEAILRTAAGRARAAMRSLAAMPAARRDGALRAAAAELRIHAVNILAANARDLDSFEGPPAMRDRLLLNEARIEAIAAGIDAIADLPDPLAGSLAEWTRPNGLVIRRVPQPLGVIGMIYESRPNVGADAAAICIKSGNAVILRGGSESYHSNTAIYLAMTKGLRQAGFPDGTVQIAPNIDRAFVAAMLGASGQIDLIIPRGGKSLVERVQREARVPVLAHAEGLNHTYIHAEADAEMARTVLANAKMRRTGICGATETLLIDAAIAPALLPRLIEDLAALGCGFRADDRARAIVPSLPAAGPADFDTEWLDAMLSVSVVDDLDAALDHIARHGSSHTEAIVTENADAAARFLAGTDSAVAMWNASTQFCDGGEFGFGAEIGIATGRIHARGPIGPAQLTTFRYHVVGTGQVRP.

The protein belongs to the gamma-glutamyl phosphate reductase family.

It localises to the cytoplasm. It catalyses the reaction L-glutamate 5-semialdehyde + phosphate + NADP(+) = L-glutamyl 5-phosphate + NADPH + H(+). Its pathway is amino-acid biosynthesis; L-proline biosynthesis; L-glutamate 5-semialdehyde from L-glutamate: step 2/2. Its function is as follows. Catalyzes the NADPH-dependent reduction of L-glutamate 5-phosphate into L-glutamate 5-semialdehyde and phosphate. The product spontaneously undergoes cyclization to form 1-pyrroline-5-carboxylate. The polypeptide is Gamma-glutamyl phosphate reductase (Acidiphilium cryptum (strain JF-5)).